The chain runs to 181 residues: Large ribosomal subunit protein uL5 (181 aa).

Belongs to the universal ribosomal protein uL5 family. Part of the 50S ribosomal subunit; part of the 5S rRNA/L5/L18/L25 subcomplex. Contacts the 5S rRNA and the P site tRNA. Forms a bridge to the 30S subunit in the 70S ribosome.

This is one of the proteins that bind and probably mediate the attachment of the 5S RNA into the large ribosomal subunit, where it forms part of the central protuberance. In the 70S ribosome it contacts protein S13 of the 30S subunit (bridge B1b), connecting the 2 subunits; this bridge is implicated in subunit movement. Contacts the P site tRNA; the 5S rRNA and some of its associated proteins might help stabilize positioning of ribosome-bound tRNAs. The polypeptide is Large ribosomal subunit protein uL5 (Sulfurovum sp. (strain NBC37-1)).